The sequence spans 1160 residues: AF4/FMR2 family member 4 (1160 aa).

The segment covering 1–19 has biased composition (basic and acidic residues); the sequence is MNREDRNVLRMKERERRNQ. Disordered stretches follow at residues 1 to 42, 78 to 289, 322 to 908, and 1031 to 1070; these read MNRE…YKVT, PKPA…SKAH, WPPP…FDDR, and NSYS…SSGG. The segment covering 115–128 has biased composition (polar residues); it reads PSTSQSQKRSSALQ. Residue Ser-120 is modified to Phosphoserine. The span at 172–189 shows a compositional bias: low complexity; it reads RSSSPGKPQAVSSLSSSH. The span at 193 to 212 shows a compositional bias: basic and acidic residues; that stretch reads HGNDHHSKEHQRSKSPRDPD. At Ser-207 the chain carries Phosphoserine. The span at 229 to 247 shows a compositional bias: low complexity; the sequence is SSQSFPPSLMSKSSSMLQK. 2 stretches are compositionally biased toward polar residues: residues 268–280 and 360–370; these read EHYS…NSMT and YSTAKTSNGHQ. Residues Ser-382, Ser-383, Ser-384, and Ser-387 each carry the phosphoserine modification. Polar residues predominate over residues 398–407; that stretch reads PRSTPGSNSE. Residues 408–424 are compositionally biased toward basic and acidic residues; sequence PSHHNSEGADNSRDDSS. The segment covering 425–457 has biased composition (low complexity); it reads SHSGSESSSGSDSESESSSSDSEANEPSQSASP. Ser-482, Ser-485, and Ser-486 each carry phosphoserine. Composition is skewed to polar residues over residues 483–496, 505–523, and 544–555; these read PASS…SSQA, GTAS…SSAT, and SPAQSDSTTQRR. At Ser-544 the chain carries Phosphoserine. Positions 563–581 are enriched in basic and acidic residues; sequence KKPEKSAAEEPRGGLKIES. Lys-578 is covalently cross-linked (Glycyl lysine isopeptide (Lys-Gly) (interchain with G-Cter in SUMO2)). A compositionally biased stretch (basic residues) spans 594–607; sequence SRHKAATKGSRKPN. Residues 608–622 are compositionally biased toward basic and acidic residues; the sequence is IKKESKSSPRPTAEK. Low complexity predominate over residues 641 to 657; that stretch reads TDTSSSDSDGSESLPPS. Residue Ser-666 is modified to Phosphoserine. Position 669 is a phosphothreonine (Thr-669). Phosphoserine occurs at positions 675, 689, 698, and 701. At Tyr-707 the chain carries Phosphotyrosine. 3 stretches are compositionally biased toward basic and acidic residues: residues 725–756, 764–784, and 794–806; these read PYKE…EKAS, KNDD…DKNS, and ESSK…EKDL. Ser-809 is modified (phosphoserine). The residue at position 817 (Lys-817) is an N6-acetyllysine. Ser-831 is modified (phosphoserine). Low complexity-rich tracts occupy residues 831-859 and 880-895; these read SQSS…SSTA and PNSS…TSES. Residues Ser-1040, Ser-1052, Ser-1055, and Ser-1059 each carry the phosphoserine modification. The span at 1059–1070 shows a compositional bias: low complexity; the sequence is SPGNSGSYSSGG.

It belongs to the AF4 family. In terms of assembly, component of the super elongation complex (SEC), at least composed of EAF1, EAF2, CDK9, MLLT3/AF9, AFF (AFF1 or AFF4), the P-TEFb complex and ELL (ELL, ELL2 or ELL3). Interacts with ELL2; the interaction is direct and leads to stabilize ELL2 and prevent ELL2 ubiquitination and degradation. Interacts with ELL3; the interaction is direct. Dephosphorylated at Ser-544 by the PNUTS-PP1 complex, promoting RNA polymerase II transcription pause-release. Highly expressed in testis by Sertoli cells, and at low levels in other tissues.

It localises to the nucleus. The protein resides in the chromosome. In terms of biological role, key component of the super elongation complex (SEC), a complex required to increase the catalytic rate of RNA polymerase II transcription by suppressing transient pausing by the polymerase at multiple sites along the DNA. In the SEC complex, AFF4 acts as a central scaffold that recruits other factors through direct interactions with ELL proteins (ELL, ELL2 or ELL3) and the P-TEFb complex. This Mus musculus (Mouse) protein is AF4/FMR2 family member 4 (Aff4).